Reading from the N-terminus, the 94-residue chain is MTLFSSISSISNPMTSSKSSIASFGSGTSMGSNSIACGGGCGGGSGGILGLGLGLGLNLFGGSRGACGGNSGSGNPGNGPCSGGKCCGGPCCGI.

The tract at residues 1 to 20 (MTLFSSISSISNPMTSSKSS) is disordered.

This sequence belongs to the hssA/B family.

The sequence is that of HssA/B-like protein 49 (hssl49) from Dictyostelium discoideum (Social amoeba).